The chain runs to 274 residues: Protein bax (274 aa).

Over residues 32–64 (TTASQKSHLTKASNKQVSSKQEYSRNSAKSSSL) the composition is skewed to polar residues. The segment at 32 to 74 (TTASQKSHLTKASNKQVSSKQEYSRNSAKSSSLPDLRKYPSGT) is disordered. 247-254 (GYSTKGKS) serves as a coordination point for ATP.

In Escherichia coli (strain K12), this protein is Protein bax (bax).